The chain runs to 151 residues: Sperm surface protein Sp17 (151 aa).

The segment covering 68–98 (FYNNHAFEEQEPPEKSDPKQEESQIPGKEEE) has biased composition (basic and acidic residues). Disordered stretches follow at residues 68-115 (FYNN…EKEE) and 130-151 (AREE…EENK). An IQ domain is found at 114–143 (EEVAAVKIQAAFRGHVAREEVKKMKTDSLQ).

In terms of assembly, homodimer. May interact with ROPN1. In terms of tissue distribution, testis- and sperm-specific.

The protein localises to the membrane. Its function is as follows. Sperm surface zona pellucida binding protein. Helps to bind spermatozoa to the zona pellucida with high affinity. Might function in binding zona pellucida and carbohydrates. The chain is Sperm surface protein Sp17 (SPA17) from Macaca fascicularis (Crab-eating macaque).